The following is a 692-amino-acid chain: Elongation factor G (692 aa).

The tr-type G domain occupies 8–282 (EKTRNIGIMA…AVVEYMPAPT (275 aa)). GTP-binding positions include 17–24 (AHIDAGKT), 81–85 (DTPGH), and 135–138 (NKMD). The interval 285–304 (PNIKGVHPETGEADERHSSD) is disordered. Over residues 290–304 (VHPETGEADERHSSD) the composition is skewed to basic and acidic residues.

The protein belongs to the TRAFAC class translation factor GTPase superfamily. Classic translation factor GTPase family. EF-G/EF-2 subfamily.

Its subcellular location is the cytoplasm. In terms of biological role, catalyzes the GTP-dependent ribosomal translocation step during translation elongation. During this step, the ribosome changes from the pre-translocational (PRE) to the post-translocational (POST) state as the newly formed A-site-bound peptidyl-tRNA and P-site-bound deacylated tRNA move to the P and E sites, respectively. Catalyzes the coordinated movement of the two tRNA molecules, the mRNA and conformational changes in the ribosome. The chain is Elongation factor G from Desulfitobacterium hafniense (strain DSM 10664 / DCB-2).